The primary structure comprises 67 residues: Ferredoxin (67 aa).

4Fe-4S ferredoxin-type domains follow at residues 3–31 (WKVSVDQDTCIGDAICASLCPDVFEMNDE) and 36–67 (PKVEVIEDEELYNCAKEAMEACPVSAITIEEA). Residues Cys12, Asp15, and Cys18 each coordinate [4Fe-4S] cluster. An intrachain disulfide couples Cys22 to Cys49. Cys57 lines the [4Fe-4S] cluster pocket.

As to quaternary structure, homodimer. The cofactor is [4Fe-4S] cluster. It depends on [3Fe-4S] cluster as a cofactor.

In terms of biological role, ferredoxins are iron-sulfur proteins that transfer electrons in a wide variety of metabolic reactions. The sequence is that of Ferredoxin (fdxA) from Pyrococcus furiosus (strain ATCC 43587 / DSM 3638 / JCM 8422 / Vc1).